A 56-amino-acid polypeptide reads, in one-letter code: Large ribosomal subunit protein bL33 (56 aa).

Belongs to the bacterial ribosomal protein bL33 family.

The polypeptide is Large ribosomal subunit protein bL33 (Vibrio vulnificus (strain YJ016)).